Reading from the N-terminus, the 75-residue chain is Phi-liotoxin-Lw1a (75 aa).

Residues 1 to 25 (MNFATKVSLLLLAIAVIVIVEGGEG) form the signal peptide. Positions 26 to 39 (DSWFEEHEESDTER) are excised as a propeptide. Intrachain disulfides connect C50-C62 and C56-C68.

As to expression, expressed by the venom gland.

The protein resides in the secreted. Affects the activity of both ryanodine-sensitive calcium-release channels RyR1 and RyR2 with high potency. At lower concentrations the toxin increases full openings of the RyRs, and at higher concentrations it inhibits full openings and induce openings to subconductance levels and reduces the number of full conductance openings. The different actions may be attributed to the toxins binding at different sites on the RyRs, with binding at a high-affinity site mediating the increase in full openings and the induction of subconductance states evoked upon binding to a lower-affinity site. Insect-selective toxin that provokes a dose-dependent contractile paralysis in crickets and blowfly larvae, followed by death. In Hormurus waigiensis (Australian rainforest scorpion), this protein is Phi-liotoxin-Lw1a.